A 149-amino-acid chain; its full sequence is MARTLPIQKTTLLKKEEVKKDWYLINAEGQTLGRLATRIALVLMGKNKPNWTPHVDCGNFVVVINADKIKLTGKKWDQKIYYRHSGYPGGIKEFTARQLQQRNPEKLIQLAVKRMLPKTILGRKALKRLKIYAGSEHPHSAQKPIELNF.

Belongs to the universal ribosomal protein uL13 family. Part of the 50S ribosomal subunit.

Its function is as follows. This protein is one of the early assembly proteins of the 50S ribosomal subunit, although it is not seen to bind rRNA by itself. It is important during the early stages of 50S assembly. The protein is Large ribosomal subunit protein uL13 of Thermosipho africanus (strain TCF52B).